A 649-amino-acid polypeptide reads, in one-letter code: Leucine-rich repeat transmembrane protein FLRT3 (649 aa).

A signal peptide spans 1-28; it reads MISAAWSIFLIGTKIGLFLQVAPLSVMA. The LRRNT domain maps to 29-58; the sequence is KSCPSVCRCDAGFIYCNDRFLTSIPTGIPE. Over 29 to 528 the chain is Extracellular; sequence KSCPSVCRCD…KEPYKNPNLP (500 aa). Cystine bridges form between cysteine 31–cysteine 37 and cysteine 35–cysteine 44. Residues 38–67 are interaction with ADGRL3; the sequence is DAGFIYCNDRFLTSIPTGIPEDATTLYLQN. 10 LRR repeats span residues 59 to 80, 84 to 104, 105 to 126, 129 to 150, 155 to 175, 176 to 197, 200 to 220, 226 to 247, 248 to 269, and 272 to 293; these read DATT…SDLK, KVER…NLPK, YVKE…SLSK, YLEE…EGAF, YLRL…GLPR, TIEE…SLQG, SLKR…GDKV, NLTE…LPGT, NLRK…AFSY, and QLYR…IFDD. The N-linked (GlcNAc...) asparagine glycan is linked to asparagine 226. N-linked (GlcNAc...) asparagine glycans are attached at residues asparagine 282 and asparagine 296. The LRRCT domain maps to 305 to 357; it reads NPWYCGCKMKWVRDWLQSLPVKVNVRGLMCQAPEKVRGMAIKDLNAELFDCKD. Cysteine 309 and cysteine 334 form a disulfide bridge. The tract at residues 387–407 is disordered; it reads KQPDIKNPKLTKDHQTTGSPS. The segment covering 389 to 401 has biased composition (basic and acidic residues); sequence PDIKNPKLTKDHQ. In terms of domain architecture, Fibronectin type-III spans 409-504; the sequence is KTITITVKSV…VCIETETAPL (96 aa). A helical membrane pass occupies residues 529–549; it reads LAAIIGGAVALVTIALLALVC. Topologically, residues 550-649 are cytoplasmic; the sequence is WYVHRNGSLF…GIPDSDHSHS (100 aa). The interval 622–649 is disordered; the sequence is LYKNNHSESSSNRSYRDSGIPDSDHSHS.

In terms of assembly, monomer and homodimer. Self-associates (via leucine-rich repeats), giving rise to homooligomers. Interacts with FGFR1. Interacts (via extracellular domain) with ADGRL1/LPHN1 and LPHN2 (via olfactomedin-like domain). Interacts (via extracellular domain) with ADGRL3 (via olfactomedin-like domain); the interaction is direct. Interacts (via extracellular domain) with UNC5B and UNC5D (via extracellular domain); the interaction is direct. Identified in complexes composed of FLRT3, ADGRL3 and UNC5B, respectively FLRT3, ADGRL3 and UNC5D. May also interact (via extracellular domain) with UNC5A and UNC5C. Interacts (via cytoplasmic domain) with ROBO1. Post-translationally, N-glycosylated. Proteolytic cleavage in the juxtamembrane region gives rise to a soluble ectodomain. Cleavage is probably effected by a metalloprotease. As to expression, expressed in kidney, brain, pancreas, skeletal muscle, lung, liver, placenta, and heart.

The protein resides in the cell membrane. It is found in the presynaptic cell membrane. It localises to the endoplasmic reticulum membrane. The protein localises to the cell junction. Its subcellular location is the focal adhesion. The protein resides in the secreted. It is found in the cell projection. It localises to the axon. The protein localises to the growth cone membrane. Functions in cell-cell adhesion, cell migration and axon guidance, exerting an attractive or repulsive role depending on its interaction partners. Plays a role in the spatial organization of brain neurons. Plays a role in vascular development in the retina. Plays a role in cell-cell adhesion via its interaction with ADGRL3 and probably also other latrophilins that are expressed at the surface of adjacent cells. Interaction with the intracellular domain of ROBO1 mediates axon attraction towards cells expressing NTN1. Mediates axon growth cone collapse and plays a repulsive role in neuron guidance via its interaction with UNC5B, and possibly also other UNC-5 family members. Promotes neurite outgrowth (in vitro). Mediates cell-cell contacts that promote an increase both in neurite number and in neurite length. Plays a role in the regulation of the density of glutamaergic synapses. Plays a role in fibroblast growth factor-mediated signaling cascades. Required for normal morphogenesis during embryonic development, but not for normal embryonic patterning. Required for normal ventral closure, headfold fusion and definitive endoderm migration during embryonic development. Required for the formation of a normal basement membrane and the maintenance of a normal anterior visceral endoderm during embryonic development. This is Leucine-rich repeat transmembrane protein FLRT3 (FLRT3) from Homo sapiens (Human).